We begin with the raw amino-acid sequence, 568 residues long: Fumarate hydratase 2 (568 aa).

[4Fe-4S] cluster is bound at residue cysteine 133. Residues 134–135 (QD), arginine 173, glycine 216, and 219–225 (NKAYLYQ) each bind (S)-malate. Positions 252 and 346 each coordinate [4Fe-4S] cluster. Residues arginine 421, 467-471 (TTAGR), and lysine 491 contribute to the (S)-malate site.

This sequence belongs to the class-I fumarase family. Homodimer. [4Fe-4S] cluster is required as a cofactor.

The protein localises to the cytoplasm. It is found in the cytosol. It carries out the reaction (S)-malate = fumarate + H2O. Its activity is regulated as follows. Specifically and competitively inhibited by 2-thiomalate, which coordinates with the catalytic [4Fe-4S] cluster. Weakly inhibited by malonate. Functionally, cytosolic fumarate hydratase that catalyzes the reversible hydration of fumarate to (S)-malate. This Leishmania major protein is Fumarate hydratase 2.